The primary structure comprises 353 residues: Glutamate 5-kinase (353 aa).

Residue Lys-8 coordinates ATP. Substrate-binding residues include Ser-47, Asp-134, and Asn-146. 198 to 204 (TGGIRSK) provides a ligand contact to ATP. Positions 262-339 (AGKIYVNKGA…SDLKKILGYE (78 aa)) constitute a PUA domain.

The protein belongs to the glutamate 5-kinase family.

The protein resides in the cytoplasm. The catalysed reaction is L-glutamate + ATP = L-glutamyl 5-phosphate + ADP. Its pathway is amino-acid biosynthesis; L-proline biosynthesis; L-glutamate 5-semialdehyde from L-glutamate: step 1/2. Functionally, catalyzes the transfer of a phosphate group to glutamate to form L-glutamate 5-phosphate. The chain is Glutamate 5-kinase from Thermotoga maritima (strain ATCC 43589 / DSM 3109 / JCM 10099 / NBRC 100826 / MSB8).